Reading from the N-terminus, the 367-residue chain is Protein RecA (367 aa).

Position 73–80 (73–80 (GPESSGKT)) interacts with ATP. The disordered stretch occupies residues 345-367 (DEPVAKKASAKESKEAKELKEVE).

Belongs to the RecA family.

It localises to the cytoplasm. Can catalyze the hydrolysis of ATP in the presence of single-stranded DNA, the ATP-dependent uptake of single-stranded DNA by duplex DNA, and the ATP-dependent hybridization of homologous single-stranded DNAs. It interacts with LexA causing its activation and leading to its autocatalytic cleavage. This Janthinobacterium sp. (strain Marseille) (Minibacterium massiliensis) protein is Protein RecA.